The following is a 714-amino-acid chain: MSKQTFTTTFAGKPLVVEVGQVAKQANGATVVRYGESTVLTAAVMSKKMSTGDFFPLQVNYEEKMYAAGKFPGGWMKREGRPSTDATLTARLIDRPIRPMFAEGFRNEVQVINTVLSYDEDASAPMAAMLGSSLALSISDIPFNGPIAGVQVAYVEGEFIINPDKAQQEASLLELTVAGTKDAINMVESGAKELPEAIMLEALLVGHKAIQELIAFQEEIVAAVGKEKAEVELLQVAADLQAEIIETYNADLQQAVQVEEKKAREAATEAVKERVIAAYEERYAADEEHDRIMRDVTEILEQMEHAEVRRLITEDKVRPDGRRVDEIRPLAAEIDFLPMVHGSGLFTRGQTQALSVLTLAPMGDTQIIDGLEPEYKKRFLHHYNFPQYSVGETGRYGAAGRREIGHGALGERALAQVLPSLEEFPYAIRLVAEVLESNGSSSQASICAGTLALMAGGVPIKAPVAGIAMGLISDGTNYTVLTDIQGLEDHFGDMDFKVAGTRQGITALQMDIKIEGITPQILEEALAQAKKARFEILDLIEATIAEPRPELAPTAPKIDTIKIDVDKIKVVIGKGGETIDKIIAETGVKIDIDEEGNVSIYSSDQDAINRAKEIIASLVREAKVGEVYHAKVVRIEKFGAFVNLFDKTDALVHISEIAWSRTANVSDVLEIGEEVDVKVIKVDDKGRIDASMKALVPRPPKPEKSEAKKEGKHD.

Mg(2+) contacts are provided by D489 and D495. Positions 556–615 (PKIDTIKIDVDKIKVVIGKGGETIDKIIAETGVKIDIDEEGNVSIYSSDQDAINRAKEII) constitute a KH domain. The S1 motif domain maps to 625–693 (GEVYHAKVVR…DKGRIDASMK (69 aa)). The tract at residues 691–714 (SMKALVPRPPKPEKSEAKKEGKHD) is disordered. Positions 700-714 (PKPEKSEAKKEGKHD) are enriched in basic and acidic residues.

This sequence belongs to the polyribonucleotide nucleotidyltransferase family. Requires Mg(2+) as cofactor.

The protein resides in the cytoplasm. The enzyme catalyses RNA(n+1) + phosphate = RNA(n) + a ribonucleoside 5'-diphosphate. Its function is as follows. Involved in mRNA degradation. Catalyzes the phosphorolysis of single-stranded polyribonucleotides processively in the 3'- to 5'-direction. The protein is Polyribonucleotide nucleotidyltransferase of Streptococcus equi subsp. zooepidemicus (strain MGCS10565).